Reading from the N-terminus, the 94-residue chain is Putative pterin-4-alpha-carbinolamine dehydratase (94 aa).

This sequence belongs to the pterin-4-alpha-carbinolamine dehydratase family.

It carries out the reaction (4aS,6R)-4a-hydroxy-L-erythro-5,6,7,8-tetrahydrobiopterin = (6R)-L-erythro-6,7-dihydrobiopterin + H2O. The sequence is that of Putative pterin-4-alpha-carbinolamine dehydratase from Mycolicibacterium smegmatis (strain ATCC 700084 / mc(2)155) (Mycobacterium smegmatis).